The chain runs to 439 residues: Choline monooxygenase, chloroplastic (439 aa).

The N-terminal 60 residues, 1 to 60, are a transit peptide targeting the chloroplast; sequence MMAASASATTMLLKYPTTVCGIPNPSSNNNNDPSNNIVSIPQNTTNPTLKSRTPNKITTN. Residues 24-41 are compositionally biased toward low complexity; sequence NPSSNNNNDPSNNIVSIP. Residues 24–54 form a disordered region; it reads NPSSNNNNDPSNNIVSIPQNTTNPTLKSRTP. Positions 42–54 are enriched in polar residues; it reads QNTTNPTLKSRTP. The Rieske domain maps to 120–227; that stretch reads WQVAGISDQI…VAVWGPFVLI (108 aa). Residues C162, H164, C181, and H184 each contribute to the [2Fe-2S] cluster site. Fe cation-binding residues include H287 and H292.

Homotrimer or homodimer. It depends on [2Fe-2S] cluster as a cofactor. Fe cation is required as a cofactor. Requires Mg(2+) as cofactor. Expressed in leaves.

It is found in the plastid. Its subcellular location is the chloroplast stroma. It carries out the reaction choline + 2 reduced [2Fe-2S]-[ferredoxin] + O2 + 2 H(+) = betaine aldehyde hydrate + 2 oxidized [2Fe-2S]-[ferredoxin] + H2O. It participates in amine and polyamine biosynthesis; betaine biosynthesis via choline pathway; betaine aldehyde from choline (monooxygenase route): step 1/1. In terms of biological role, catalyzes the first step of the osmoprotectant glycine betaine synthesis. In Spinacia oleracea (Spinach), this protein is Choline monooxygenase, chloroplastic (CMO).